The following is a 421-amino-acid chain: Histidine--tRNA ligase (421 aa).

It belongs to the class-II aminoacyl-tRNA synthetase family.

The protein localises to the cytoplasm. The catalysed reaction is tRNA(His) + L-histidine + ATP = L-histidyl-tRNA(His) + AMP + diphosphate + H(+). In Pyrobaculum islandicum (strain DSM 4184 / JCM 9189 / GEO3), this protein is Histidine--tRNA ligase.